The primary structure comprises 253 residues: uncharacterized protein (253 aa).

The signal sequence occupies residues methionine 1 to glycine 16. Residue cysteine 17 is the site of N-palmitoyl cysteine attachment. Residue cysteine 17 is the site of S-diacylglycerol cysteine attachment.

The protein belongs to the staphylococcal tandem lipoprotein family.

The protein localises to the cell membrane. This is an uncharacterized protein from Staphylococcus aureus (strain N315).